The primary structure comprises 356 residues: Glutamine synthetase (356 aa).

The 81-residue stretch at 19 to 99 (VIAEYIWIGG…VICDTYTPAG (81 aa)) folds into the GS beta-grasp domain. The 251-residue stretch at 106–356 (KRHGAAKIFS…IAETTLLWKP (251 aa)) folds into the GS catalytic domain.

This sequence belongs to the glutamine synthetase family. As to quaternary structure, homooctamer. As to expression, found at highest levels in root nodules.

The protein resides in the cytoplasm. The catalysed reaction is L-glutamate + NH4(+) + ATP = L-glutamine + ADP + phosphate + H(+). The polypeptide is Glutamine synthetase (GLN1) (Alnus glutinosa (European alder)).